We begin with the raw amino-acid sequence, 219 residues long: Bacterial microcompartment shell protein EutL (219 aa).

BMC circularly permuted domains are found at residues 1–113 (MPAL…GAAF) and 114–215 (QWAN…ARNP). Ethanolamine is bound by residues aspartate 45, aspartate 46, glutamate 83, and phenylalanine 113. The segment at 45–46 (DD) is part of the acidic patch lining the small pore. Zn(2+) is bound at residue glutamate 157. Residue 183–185 (TNY) participates in ethanolamine binding.

The protein belongs to the EutL/PduB family. As to quaternary structure, homotrimerizes to form a pseudohexamer. The trimers form a two-dimensional array about 37 Angstroms thick.

Its subcellular location is the bacterial microcompartment. It participates in amine and polyamine degradation; ethanolamine degradation. Its function is as follows. A component of the bacterial microcompartment (BMC) shell dedicated to ethanolamine degradation. Two crystal forms have been seen; a form with a closed central pore that has 3 very small (1.1-2.2 Angstroms) channels per trimer lined by acidic and aromatic residues. A form with a large central pore (8-12 Angstroms) has also been seen; this is probably a functional pore which allows molecules to enter and exit the BMC in a selective, gated manner. Another group only sees the central pore in the presence of Zn(2+); soaking crystals in ZnCl(2) leads to dramatic conformational changes that open a central pore of about 12 Angstroms. Whether Zn(2+) binding is physiologically relevant is unclear, however it suggests a gating mechanism exists. Ethanolamine-binding by the small channels has been hypothesized to stabilize the EutL central pore in a closed (non-transporting) state. An open pore is thought to be large enough to transport ATP and/or cobalamin. This chain is Bacterial microcompartment shell protein EutL (eutL), found in Escherichia coli (strain K12).